The sequence spans 590 residues: MAGAVPGAIMDEDYYGSAAEWGDEADGGQQEDDSGEGEDDAEVQQECLHKFSTRDYIMEPSIFNTLKRYFQAGGSPENVIQLLSENYTAVAQTVNLLAEWLIQTGVEPVQVQETVENHLKSLLIKHFDPRKADSIFTEEGETPAWLEQMIAHTTWRDLFYKLAEAHPDCLMLNFTVKLISDAGYQGEITSVSTACQQLEVFSRVLRTSLATILDGGEENLEKNLPEFAKMVCHGEHTYLFAQAMMSVLAQEEQGGSAVRRIAQEVQRFAQEKGHDASQITLALGTAASYPRACQALGAMLSKGALNPADITVLFKMFTSMDPPPVELIRVPAFLDLFMQSLFKPGARINQDHKHKYIHILAYAASVVETWKKNKRVSINKDELKSTSKAVETVHNLCCNENKGASELVAELSTLYQCIRFPVVAMGVLKWVDWTVSEPRYFQLQTDHTPVHLALLDEISTCHQLLHPQVLQLLVKLFETEHSQLDVMEQLELKKTLLDRMVHLLSRGYVLPVVSYIRKCLEKLDTDISLIRYFVTEVLDVIAPPYTSDFVQLFLPILENDSIAGTIKTEGEHDPVTEFIAHCKSNFIMVN.

The tract at residues 16–43 (GSAAEWGDEADGGQQEDDSGEGEDDAEV) is disordered. Residues 21–43 (WGDEADGGQQEDDSGEGEDDAEV) are compositionally biased toward acidic residues.

It belongs to the NELF-D family. The NELF complex is composed of NELFA, NELFB, NELFCD (isoform NELF-C or isoform NELF-D) and NELFE; NELFA and NELFCD form a stable subcomplex that binds primarily through NELFCD to the N-terminus of NELFB. Binds RNA which may help to stabilize the NELF complex on nucleic acid. In vitro, the NELFA:NELFCD subcomplex binds to ssDNA and ssRNA in a sequence- and structure-dependent manner. Interacts with ARAF. Interacts with PCF11. Interacts with KAT8. In terms of tissue distribution, widely expressed. Expressed in heart, brain, lung, placenta, liver, skeletal and cardiac muscle, adrenal, thyroid, kidney and pancreas.

It is found in the nucleus. In terms of biological role, essential component of the NELF complex, a complex that negatively regulates the elongation of transcription by RNA polymerase II. The NELF complex, which acts via an association with the DSIF complex and causes transcriptional pausing, is counteracted by the P-TEFb kinase complex. Functionally, (Microbial infection) The NELF complex is involved in HIV-1 latency possibly involving recruitment of PCF11 to paused RNA polymerase II. This Homo sapiens (Human) protein is Negative elongation factor C/D (NELFCD).